The sequence spans 284 residues: Bifunctional protein FolD (284 aa).

NADP(+) is bound by residues 166 to 168 and I232; that span reads GAS.

This sequence belongs to the tetrahydrofolate dehydrogenase/cyclohydrolase family. In terms of assembly, homodimer.

The enzyme catalyses (6R)-5,10-methylene-5,6,7,8-tetrahydrofolate + NADP(+) = (6R)-5,10-methenyltetrahydrofolate + NADPH. It carries out the reaction (6R)-5,10-methenyltetrahydrofolate + H2O = (6R)-10-formyltetrahydrofolate + H(+). It functions in the pathway one-carbon metabolism; tetrahydrofolate interconversion. Functionally, catalyzes the oxidation of 5,10-methylenetetrahydrofolate to 5,10-methenyltetrahydrofolate and then the hydrolysis of 5,10-methenyltetrahydrofolate to 10-formyltetrahydrofolate. The protein is Bifunctional protein FolD of Pseudomonas aeruginosa (strain LESB58).